The sequence spans 55 residues: Large ribosomal subunit protein bL33 (55 aa).

The protein belongs to the bacterial ribosomal protein bL33 family.

This is Large ribosomal subunit protein bL33 from Hamiltonella defensa subsp. Acyrthosiphon pisum (strain 5AT).